Here is a 1091-residue protein sequence, read N- to C-terminus: LRR receptor-like serine/threonine-protein kinase RGI3 (1091 aa).

The N-terminal stretch at 1-24 is a signal peptide; the sequence is MPPNIYRLSFFSSLLCFFFIPCFS. Over 25-703 the chain is Extracellular; sequence LDQQGQALLS…TTRNSSVVRL (679 aa). The LRR 1 repeat unit spans residues 33 to 56; sequence LSWKSQLNISGDAFSSWHVADTSP. N-linked (GlcNAc...) asparagine glycosylation is present at Asn40. A disulfide bond links Cys57 and Cys64. 26 LRR repeats span residues 67–91, 92–115, 116–140, 142–166, 168–188, 190–213, 214–237, 239–261, 262–285, 287–309, 311–332, 333–357, 359–383, 385–405, 406–429, 431–453, 454–477, 478–501, 503–524, 525–548, 549–572, 574–596, 598–620, 621–644, 645–668, and 669–690; these read RGEVSEIQLKGMDLQGSLPVTSLRS, LKSLTSLTLSSLNLTGVIPKEIGD, FTELELLDLSDNSLSGDIPVEIFRL, KLKTLSLNTNNLEGHIPMEIGNLSG, VELMLFDNKLSGEIPRSIGEL, NLQVLRAGGNKNLRGELPWEIGNC, ENLVMLGLAETSLSGKLPASIGNL, RVQTIAIYTSLLSGPIPDEIGYC, TELQNLYLYQNSISGSIPTTIGGL, KLQSLLLWQNNLVGKIPTELGNC, ELWLIDFSENLLTGTIPRSFGK, LENLQELQLSVNQISGTIPEELTNC, KLTHLEIDNNLITGEIPSLMSNLRS, TMFFAWQNKLTGNIPQSLSQC, RELQAIDLSYNSLSGSIPKEIFGL, NLTKLLLLSNDLSGFIPPDIGNC, TNLYRLRLNGNRLAGSIPSEIGNL, KNLNFVDISENRLVGSIPPAISGC, SLEFLDLHTNSLSGSLLGTTLP, KSLKFIDFSDNALSSTLPPGIGLL, TELTKLNLAKNRLSGEIPREISTC, SLQLLNLGENDFSGEIPDELGQI, SLAISLNLSCNRFVGEIPSRFSD, LKNLGVLDVSHNQLTGNLNVLTDL, QNLVSLNISYNDFSGDLPNTPFFR, and RLPLSDLASNRGLYISNAISTR. N-linked (GlcNAc...) asparagine glycosylation occurs at Asn104. Asn163 carries N-linked (GlcNAc...) asparagine glycosylation. Short sequence motifs (small peptide recognition) lie at residues 173–174, 195–198, 218–223, Tyr246, and 268–270; these read FD, RAGG, MLGLAE, and YLY. 2 short sequence motifs (small peptide recognition) span residues 316-319 and 338-340; these read DFSE and ELQ. Asn356 carries N-linked (GlcNAc...) asparagine glycosylation. 2 short sequence motifs (small peptide recognition) span residues 386–390 and 412–415; these read MFFAW and DLSY. Asn431 carries N-linked (GlcNAc...) asparagine glycosylation. The short motif at 434 to 438 is the Small peptide recognition element; sequence KLLLL. Asn452 carries an N-linked (GlcNAc...) asparagine glycan. Positions 458-460 match the Small peptide recognition motif; the sequence is RLR. An N-linked (GlcNAc...) asparagine glycan is attached at Asn604. Asn651 carries an N-linked (GlcNAc...) asparagine glycan. A glycan (N-linked (GlcNAc...) asparagine) is linked at Asn697. A helical membrane pass occupies residues 704–724; it reads TILILVVVTAVLVLMAVYTLV. At 725–1091 the chain is on the cytoplasmic side; the sequence is RARAAGKQLL…CSFAFSDDSV (367 aa). A Protein kinase domain is found at 760-1046; the sequence is LTSANVIGTG…MLTEIRHIDV (287 aa). ATP is bound by residues 766–774 and Lys788; that span reads IGTGSSGVV. A phosphotyrosine mark is found at Tyr831 and Tyr870. The active-site Proton acceptor is the Asp883. Tyr933 bears the Phosphotyrosine mark.

Belongs to the protein kinase superfamily. Ser/Thr protein kinase family. Binds to RGF peptides such as RGF1, GLV5/CLEL1/RGF2, GLV7/CLEL3/RGF3, GLV3/RGF4, GLV10/CLEL7/RGF5 and RGF10/CLELN; these interactions trigger the formation of heterodimers with SERK1, SERK2 or BAK1/SERK3 via LRR regions. In terms of processing, phosphorylated and ubiquitinated upon interaction with RGF1, thus leading to activation a subsequent degradation. Autophosphorylated. As to expression, expressed in roots.

It is found in the cell membrane. The enzyme catalyses L-seryl-[protein] + ATP = O-phospho-L-seryl-[protein] + ADP + H(+). The catalysed reaction is L-threonyl-[protein] + ATP = O-phospho-L-threonyl-[protein] + ADP + H(+). In terms of biological role, together with RGI1, RGI2, RGI4 and RGI5, acts as a receptor of RGF peptides (e.g. RGF1, GLV5/CLEL1/RGF2, GLV7/CLEL3/RGF3, GLV3/RGF4, GLV10/CLEL7/RGF5 and RGF10/CLELN), peptide hormones which maintain the postembryonic root stem cell niche by regulating the expression levels and patterns of the transcription factor PLETHORA (PLT, e.g. PLT1 and PLT2). Links RGF peptides signal with their downstream components. This is LRR receptor-like serine/threonine-protein kinase RGI3 from Arabidopsis thaliana (Mouse-ear cress).